Reading from the N-terminus, the 142-residue chain is Putative FK506-binding protein 9-like protein (142 aa).

Residues 1–49 (MDMGLREMCVGEKRTVIIPPHLGYGEAGVDGEVPGSAVLVFDIELLELV) form the PPIase FKBP-type domain. EF-hand domains lie at 60 to 95 (WNGE…QVAS) and 105 to 140 (DAEL…AKQD). Residues Asp-118, Asn-120, Asp-122, Lys-124, and Glu-129 each contribute to the Ca(2+) site.

In Homo sapiens (Human), this protein is Putative FK506-binding protein 9-like protein (FKBP9P1).